A 225-amino-acid chain; its full sequence is PKHD-type hydroxylase YbiX (225 aa).

The 100-residue stretch at 78–177 (TLSTPLFNRY…RVASFMWIQS (100 aa)) folds into the Fe2OG dioxygenase domain. Fe cation-binding residues include His96, Asp98, and His158. Arg168 lines the 2-oxoglutarate pocket.

Fe(2+) serves as cofactor. It depends on L-ascorbate as a cofactor.

The polypeptide is PKHD-type hydroxylase YbiX (Shigella boydii serotype 18 (strain CDC 3083-94 / BS512)).